A 367-amino-acid polypeptide reads, in one-letter code: GPN-loop GTPase 1 (367 aa).

GTP contacts are provided by residues 15–22 (GMAGSGKT) and 18–23 (GSGKTT). A Gly-Pro-Asn (GPN)-loop; involved in dimer interface motif is present at residues 75 to 77 (GPN). Residue 178–181 (NKCD) coordinates GTP. A coiled-coil region spans residues 247–290 (EGMDDFLEAVKAKVKEYEEEYVPEMERMKEIQRQTKERQKEAQL). The disordered stretch occupies residues 306–332 (VGLTVSDAEDEYNGELVDPDEDDGLTA). Ser-311 is modified (phosphoserine). A compositionally biased stretch (acidic residues) spans 312-332 (DAEDEYNGELVDPDEDDGLTA).

This sequence belongs to the GPN-loop GTPase family. Heterodimers with gpn2 or fet5/gpn3. Binds to RNA polymerase II (RNAPII).

The protein resides in the cytoplasm. Its function is as follows. Small GTPase required for proper nuclear import of RNA polymerase II (RNAPII). May act at an RNAP assembly step prior to nuclear import. The sequence is that of GPN-loop GTPase 1 from Schizosaccharomyces pombe (strain 972 / ATCC 24843) (Fission yeast).